The sequence spans 356 residues: Protein RecA (356 aa).

67-74 (GPESSGKT) is a binding site for ATP.

It belongs to the RecA family.

It localises to the cytoplasm. Its function is as follows. Can catalyze the hydrolysis of ATP in the presence of single-stranded DNA, the ATP-dependent uptake of single-stranded DNA by duplex DNA, and the ATP-dependent hybridization of homologous single-stranded DNAs. It interacts with LexA causing its activation and leading to its autocatalytic cleavage. The sequence is that of Protein RecA from Yersinia pestis bv. Antiqua (strain Angola).